A 216-amino-acid polypeptide reads, in one-letter code: Superoxide dismutase [Cu-Zn], chloroplastic (216 aa).

The transit peptide at 1 to 62 (MACHSALAAV…ASPRSMVVVA (62 aa)) directs the protein to the chloroplast. Residues histidine 108, histidine 110, and histidine 125 each contribute to the Cu cation site. A disulfide bond links cysteine 119 and cysteine 208. Zn(2+) is bound by residues histidine 125, histidine 133, histidine 142, and aspartate 145. Histidine 182 is a Cu cation binding site.

The protein belongs to the Cu-Zn superoxide dismutase family. In terms of assembly, homotetramer. The cofactor is Cu cation. Requires Zn(2+) as cofactor.

The protein resides in the plastid. It is found in the chloroplast. The enzyme catalyses 2 superoxide + 2 H(+) = H2O2 + O2. In terms of biological role, destroys radicals which are normally produced within the cells and which are toxic to biological systems. This chain is Superoxide dismutase [Cu-Zn], chloroplastic (SODCP), found in Zantedeschia aethiopica (White calla lily).